We begin with the raw amino-acid sequence, 375 residues long: Serpin B5 (375 aa).

N99, N133, N155, N188, and N361 each carry an N-linked (GlcNAc...) asparagine glycan.

The protein belongs to the serpin family. Ov-serpin subfamily. As to quaternary structure, interacts with IRF6.

It is found in the secreted. Its subcellular location is the extracellular space. In terms of biological role, tumor suppressor. It blocks the growth, invasion, and metastatic properties of mammary tumors. As it does not undergo the S (stressed) to R (relaxed) conformational transition characteristic of active serpins, it exhibits no serine protease inhibitory activity. The protein is Serpin B5 (SERPINB5) of Plecturocebus moloch (Dusky titi monkey).